Here is a 1111-residue protein sequence, read N- to C-terminus: Phytochrome C (1111 aa).

Residues 213-393 (NMLLLCDALV…VFGVQINKEA (181 aa)) enclose the GAF domain. Position 318 (cysteine 318) interacts with phytochromobilin. PAS domains are found at residues 604 to 674 (IVNE…LEGS) and 737 to 808 (DYAR…TKLR). Residues 889 to 1111 (YLRHEVKDPE…FVILTEFPLI (223 aa)) form the Histidine kinase domain.

Belongs to the phytochrome family. Homodimer. Contains one covalently linked phytochromobilin chromophore.

In terms of biological role, regulatory photoreceptor which exists in two forms that are reversibly interconvertible by light: the Pr form that absorbs maximally in the red region of the spectrum and the Pfr form that absorbs maximally in the far-red region. Photoconversion of Pr to Pfr induces an array of morphogenic responses, whereas reconversion of Pfr to Pr cancels the induction of those responses. Pfr controls the expression of a number of nuclear genes including those encoding the small subunit of ribulose-bisphosphate carboxylase, chlorophyll A/B binding protein, protochlorophyllide reductase, rRNA, etc. It also controls the expression of its own gene(s) in a negative feedback fashion. This chain is Phytochrome C (PHYC), found in Arabidopsis thaliana (Mouse-ear cress).